Consider the following 472-residue polypeptide: Siroheme synthase 1 (472 aa).

The precorrin-2 dehydrogenase /sirohydrochlorin ferrochelatase stretch occupies residues 1–203; it reads MDYLPLFADL…GQLAQAEEEL (203 aa). NAD(+)-binding positions include 22–23 and 43–44; these read EV and QT. Ser-128 bears the Phosphoserine mark. Residues 215 to 472 form a uroporphyrinogen-III C-methyltransferase region; the sequence is GEVALVGAGP…AISPSVVNLA (258 aa). Pro-224 contacts S-adenosyl-L-methionine. Catalysis depends on Asp-247, which acts as the Proton acceptor. Lys-269 acts as the Proton donor in catalysis. S-adenosyl-L-methionine is bound by residues 300–302, Ile-305, 330–331, Met-382, and Gly-411; these read GGD and TA.

This sequence in the N-terminal section; belongs to the precorrin-2 dehydrogenase / sirohydrochlorin ferrochelatase family. In the C-terminal section; belongs to the precorrin methyltransferase family.

It carries out the reaction uroporphyrinogen III + 2 S-adenosyl-L-methionine = precorrin-2 + 2 S-adenosyl-L-homocysteine + H(+). The catalysed reaction is precorrin-2 + NAD(+) = sirohydrochlorin + NADH + 2 H(+). It catalyses the reaction siroheme + 2 H(+) = sirohydrochlorin + Fe(2+). Its pathway is cofactor biosynthesis; adenosylcobalamin biosynthesis; precorrin-2 from uroporphyrinogen III: step 1/1. The protein operates within cofactor biosynthesis; adenosylcobalamin biosynthesis; sirohydrochlorin from precorrin-2: step 1/1. It participates in porphyrin-containing compound metabolism; siroheme biosynthesis; precorrin-2 from uroporphyrinogen III: step 1/1. It functions in the pathway porphyrin-containing compound metabolism; siroheme biosynthesis; siroheme from sirohydrochlorin: step 1/1. Its pathway is porphyrin-containing compound metabolism; siroheme biosynthesis; sirohydrochlorin from precorrin-2: step 1/1. Multifunctional enzyme that catalyzes the SAM-dependent methylations of uroporphyrinogen III at position C-2 and C-7 to form precorrin-2 via precorrin-1. Then it catalyzes the NAD-dependent ring dehydrogenation of precorrin-2 to yield sirohydrochlorin. Finally, it catalyzes the ferrochelation of sirohydrochlorin to yield siroheme. This chain is Siroheme synthase 1, found in Yersinia enterocolitica serotype O:8 / biotype 1B (strain NCTC 13174 / 8081).